The sequence spans 531 residues: Cytochrome P450 monooxygenase ffsD (531 aa).

Residues 40–60 form a helical membrane-spanning segment; it reads VGALLGISLSVVLLLWVISVV. Residue Cys-475 coordinates heme.

The protein belongs to the cytochrome P450 family. Requires heme as cofactor.

It is found in the membrane. It functions in the pathway mycotoxin biosynthesis. Functionally, cytochrome P450 monooxygenase; part of the gene cluster that mediates the biosynthesis of the cytotoxic leucine-containing cytochalasans, including aspochalasin C, aspochalasin E, TMC-169, flavichalasine F, aspergillin PZ, aspochalasin M and flavichalasine G. The first step in the pathway is catalyzed by the hybrid PKS-NRPS ffsA that utilizes 8 units of malonyl-CoA to iteratively assemble the octaketide chain before addition of L-leucine by the C-terminal NRPS modules. Because ffsA lacks a designated enoylreductase (ER) domain, the required activity is provided the enoyl reductase fssC. The methyltransferase (MT) domain of ffsA catalyzes the alpha-methylation at C10 and C14 using S-adenosyl-L-methionine as the methyl-donating cosubstrate. Reduction by the hydrolyase ffsE, followed by dehydration and intra-molecular Diels-Alder cyclization by the Diels-Alderase ffsF then yield the required isoindolone-fused macrocycle. A number of oxidative steps catalyzed by the tailoring cytochrome P450 monooxygenase ffsD, the FAD-linked oxidoreductase ffsJ and the short-chain dehydrogenase/reductase ffsI, are further required to afford the final products. In Aspergillus flavipes, this protein is Cytochrome P450 monooxygenase ffsD.